Consider the following 419-residue polypeptide: Gamma-glutamyl phosphate reductase (419 aa).

It belongs to the gamma-glutamyl phosphate reductase family.

The protein resides in the cytoplasm. The catalysed reaction is L-glutamate 5-semialdehyde + phosphate + NADP(+) = L-glutamyl 5-phosphate + NADPH + H(+). Its pathway is amino-acid biosynthesis; L-proline biosynthesis; L-glutamate 5-semialdehyde from L-glutamate: step 2/2. Catalyzes the NADPH-dependent reduction of L-glutamate 5-phosphate into L-glutamate 5-semialdehyde and phosphate. The product spontaneously undergoes cyclization to form 1-pyrroline-5-carboxylate. This chain is Gamma-glutamyl phosphate reductase, found in Yersinia pestis.